A 476-amino-acid polypeptide reads, in one-letter code: Sulfite exporter TauE/SafE family protein 3 (476 aa).

The next 12 helical transmembrane spans lie at 8 to 28 (WLGLRSVTIFLINFSLAFAFV), 76 to 92 (FNWQIVLGTLVGFFGAA), 99 to 115 (VGGGGIFVPMLSLIIGF), 120 to 142 (ATAISKCMIMGASVSTVYYNLRL), 151 to 171 (IIDYDLALLIQPMLMLGISIG), 172 to 192 (VAFNVIFPDWLVTVLLIVLFL), 257 to 277 (VYWKELGLLVFVWIVFLALQI), 291 to 311 (VINLLQIPVAVGVSGYEAVAL), 339 to 359 (FGIIAGIVGGLLGLGGGFIMG), 360 to 380 (PLFLELGVPPQVSSATATFAM), 397 to 417 (FPVPYALYLVGVATIAAWVGQ), and 433 to 453 (IIFILASMIFISAISLGGVGI).

This sequence belongs to the 4-toluene sulfonate uptake permease (TSUP) (TC 2.A.102) family.

The protein localises to the membrane. The polypeptide is Sulfite exporter TauE/SafE family protein 3 (Arabidopsis thaliana (Mouse-ear cress)).